A 313-amino-acid chain; its full sequence is Small ribosomal subunit protein uS2 (313 aa).

A compositionally biased stretch (basic and acidic residues) spans 234–243 (DEEAKEEKTK). Residues 234–313 (DEEAKEEKTK…ASKAEAEEGK (80 aa)) are disordered. A compositionally biased stretch (basic residues) spans 244–256 (AKTTAKKVVTKKA). Basic and acidic residues predominate over residues 266 to 297 (AEKKSEKPTTEKRPTKEAAETKETSEEPKTKE).

This sequence belongs to the universal ribosomal protein uS2 family.

This chain is Small ribosomal subunit protein uS2, found in Coxiella burnetii (strain Dugway 5J108-111).